A 569-amino-acid polypeptide reads, in one-letter code: Carotenoid cleavage dioxygenase 8 homolog B, chloroplastic (569 aa).

A chloroplast-targeting transit peptide spans 1-43 (MSPAMLQASSLCVSAALSGAASRPGRLASQGHQGKRAVAQPLA). A disordered region spans residues 23–81 (RPGRLASQGHQGKRAVAQPLAASAVTEAAPPAPVVAPPARPVDAPRRRGGRGGGGGGGE). Pro residues predominate over residues 52–62 (PPAPVVAPPAR). Fe cation is bound by residues histidine 251, histidine 301, histidine 368, and histidine 558.

It belongs to the carotenoid oxygenase family. It depends on Fe(2+) as a cofactor. Expressed in parenchyma cells of the root stele, shoot apex, leaf buds, xylem parenchyma cells of the stem, inflorescences and panicles.

Its subcellular location is the plastid. The protein resides in the chloroplast. It catalyses the reaction 9-cis-10'-apo-beta-carotenal + 2 O2 = (2E,4E,6E)-7-hydroxy-4-methylhepta-2,4,6-trienal + (11R)-carlactone. The catalysed reaction is all-trans-10'-apo-beta-carotenal + O2 = (2E,4E,6E)-4-methylocta-2,4,6-trienedial + 13-apo-beta-carotenone. Involved in strigolactones biosynthesis by cleaving the C(27) 9-cis-10'-apo-beta-carotenal produced by CCD7. Produces the C(19) carlactone and a C(8) hydroxyaldehyde. Also shows lower activity with all-trans-10'-apo-beta-carotenal producing a C(9) dialdehyde and the C(18) 13-apo-beta-carotenone. Strigolactones are hormones that inhibit tillering and shoot branching through the MAX-dependent pathway, contribute to the regulation of shoot architectural response to phosphate-limiting conditions and function as rhizosphere signal that stimulates hyphal branching of arbuscular mycorrhizal fungi and trigger seed germination of root parasitic weeds. The chain is Carotenoid cleavage dioxygenase 8 homolog B, chloroplastic (CCD8B) from Oryza sativa subsp. japonica (Rice).